The chain runs to 312 residues: Apolipoprotein E (312 aa).

The N-terminal stretch at 1–18 (MKALWAVLLVTLLAGCLA) is a signal peptide. Tandem repeats lie at residues 72 to 93 (VLME…EQLG), 94 to 115 (PVAE…ARLG), 116 to 137 (ADME…TMLG), 138 to 159 (QSTE…KRLM), 160 to 181 (RDAE…EGAE), 182 to 203 (RGVS…QRTA), 204 to 225 (NLGA…DRIR), and 226 to 247 (GRLE…EHME). The 8 X 22 AA approximate tandem repeats stretch occupies residues 72 to 247 (VLMEDTMTEV…RLEEVREHME (176 aa)). M135 bears the Methionine sulfoxide mark. The residue at position 139 (S139) is a Phosphoserine. The tract at residues 150 to 160 (HLRKMRKRLMR) is LDL and other lipoprotein receptors binding. Position 154–157 (154–157 (MRKR)) interacts with heparin. The segment at 202 to 282 (TANLGAGAAQ…GWFEPIVEDM (81 aa)) is lipid-binding and lipoprotein association. 221 to 228 (GDRIRGRL) provides a ligand contact to heparin. The homooligomerization stretch occupies residues 258 to 312 (QQIRLQAEIFQARLKGWFEPIVEDMHRQWANLMEKIQASVATNPIISTPMPQENQ). A specificity for association with VLDL region spans residues 270-282 (RLKGWFEPIVEDM).

Belongs to the apolipoprotein A1/A4/E family. Homotetramer. May interact with ABCA1; functionally associated with ABCA1 in the biogenesis of HDLs. May interact with APP/A4 amyloid-beta peptide; the interaction is extremely stable in vitro but its physiological significance is unclear. May interact with MAPT. May interact with MAP2. In the cerebrospinal fluid, interacts with secreted SORL1. Interacts with PMEL; this allows the loading of PMEL luminal fragment on ILVs to induce fibril nucleation. APOE exists as multiple glycosylated and sialylated glycoforms within cells and in plasma. The extent of glycosylation and sialylation are tissue and context specific. Post-translationally, glycated in plasma VLDL. In terms of processing, phosphorylated by FAM20C in the extracellular medium.

The protein resides in the secreted. It localises to the extracellular space. It is found in the extracellular matrix. The protein localises to the extracellular vesicle. Its subcellular location is the endosome. The protein resides in the multivesicular body. Its function is as follows. APOE is an apolipoprotein, a protein associating with lipid particles, that mainly functions in lipoprotein-mediated lipid transport between organs via the plasma and interstitial fluids. APOE is a core component of plasma lipoproteins and is involved in their production, conversion and clearance. Apolipoproteins are amphipathic molecules that interact both with lipids of the lipoprotein particle core and the aqueous environment of the plasma. As such, APOE associates with chylomicrons, chylomicron remnants, very low density lipoproteins (VLDL) and intermediate density lipoproteins (IDL) but shows a preferential binding to high-density lipoproteins (HDL). It also binds a wide range of cellular receptors including the LDL receptor/LDLR, the LDL receptor-related proteins LRP1, LRP2 and LRP8 and the very low-density lipoprotein receptor/VLDLR that mediate the cellular uptake of the APOE-containing lipoprotein particles. Finally, APOE also has a heparin-binding activity and binds heparan-sulfate proteoglycans on the surface of cells, a property that supports the capture and the receptor-mediated uptake of APOE-containing lipoproteins by cells. A main function of APOE is to mediate lipoprotein clearance through the uptake of chylomicrons, VLDLs, and HDLs by hepatocytes. APOE is also involved in the biosynthesis by the liver of VLDLs as well as their uptake by peripheral tissues ensuring the delivery of triglycerides and energy storage in muscle, heart and adipose tissues. By participating in the lipoprotein-mediated distribution of lipids among tissues, APOE plays a critical role in plasma and tissues lipid homeostasis. APOE is also involved in two steps of reverse cholesterol transport, the HDLs-mediated transport of cholesterol from peripheral tissues to the liver, and thereby plays an important role in cholesterol homeostasis. First, it is functionally associated with ABCA1 in the biogenesis of HDLs in tissues. Second, it is enriched in circulating HDLs and mediates their uptake by hepatocytes. APOE also plays an important role in lipid transport in the central nervous system, regulating neuron survival and sprouting. This chain is Apolipoprotein E (Apoe), found in Mus pahari (Gairdner's shrew-mouse).